The following is a 565-amino-acid chain: MHEIFNMLLAVFDRAALMLICLFFLIRIRLFRELLHKSAHSPKELLAVTAIFSLFALFSTWSGVPVEGSLVNVRIIAVMSGGILFGPWVGIITGVIAGIHRYLIDIGGVTAIPCFITSILAGCISGWINLKIPKAQRWRVGILGGMLCETLTMILVIVWAPTTALGIDIVSKIGIPMILGSVCIGFIVLLVQSVEGEKEASAARQAKLALDIANKTLPLFRHVNSESLRKVCEIIRDDIHADAVAITNTDHVLAYVGVGEHNYQNGDDFISPTTRQAMNYGKIIIKNNDEAHRTPEIHSMLVIPLWEKGVVTGTLKIYYCHAHQITSSLQEMAVGLSQIISTQLEVSRAEQLREMANKAELRALQSKINPHFLFNALNAISSSIRLNPDTARQLIFNLSRYLRYNIELKDDEQIDIKKELYQIKDYIAIEQARFGDKLTVIYDIDEEVNCCIPSLLIQPLVENAIVHGIQPCKGKGVVTISVAECGNRVRIAVRDTGHGIDPKVIERVEANEMPGNKIGLLNVHHRVKLLYGEGLHIRRLEPGTEIAFYIPNQRTPVASQATLLL.

Residues 1-3 (MHE) are Cytoplasmic-facing. A helical membrane pass occupies residues 4–24 (IFNMLLAVFDRAALMLICLFF). Residues 25–45 (LIRIRLFRELLHKSAHSPKEL) lie on the Periplasmic side of the membrane. The helical transmembrane segment at 46–66 (LAVTAIFSLFALFSTWSGVPV) threads the bilayer. Residues 67–74 (EGSLVNVR) lie on the Cytoplasmic side of the membrane. Residues 75-95 (IIAVMSGGILFGPWVGIITGV) traverse the membrane as a helical segment. Residues 96–107 (IAGIHRYLIDIG) are Periplasmic-facing. Residues 108-128 (GVTAIPCFITSILAGCISGWI) form a helical membrane-spanning segment. Residues 129–139 (NLKIPKAQRWR) are Cytoplasmic-facing. The chain crosses the membrane as a helical span at residues 140-160 (VGILGGMLCETLTMILVIVWA). Over 161 to 172 (PTTALGIDIVSK) the chain is Periplasmic. A helical transmembrane segment spans residues 173 to 193 (IGIPMILGSVCIGFIVLLVQS). The Cytoplasmic portion of the chain corresponds to 194-565 (VEGEKEASAA…PVASQATLLL (372 aa)). A GAF domain is found at 223–342 (VNSESLRKVC…AVGLSQIIST (120 aa)). The Histidine kinase domain occupies 343 to 554 (QLEVSRAEQL…EIAFYIPNQR (212 aa)). At His371 the chain carries Phosphohistidine; by autocatalysis.

In terms of assembly, interacts with BtsT and YhjX. Post-translationally, autophosphorylated.

The protein resides in the cell inner membrane. It catalyses the reaction ATP + protein L-histidine = ADP + protein N-phospho-L-histidine.. Functionally, member of the two-component regulatory system YpdA/YpdB, which is part of a nutrient-sensing regulatory network composed of YpdA/YpdB, the high-affinity pyruvate signaling system BtsS/BtsR and their respective target proteins, YhjX and BtsT. YpdA activates YpdB by phosphorylation in response to high concentrations of extracellular pyruvate. Activation of the YpdA/YpdB signaling cascade also promotes BtsS/BtsR-mediated btsT expression. The sequence is that of Sensor histidine kinase YpdA (ypdA) from Escherichia coli (strain K12).